Here is a 191-residue protein sequence, read N- to C-terminus: FMN-dependent NADH:quinone oxidoreductase 1 (191 aa).

FMN is bound by residues Ser10 and 16–18; that span reads SVS.

It belongs to the azoreductase type 1 family. As to quaternary structure, homodimer. Requires FMN as cofactor.

The enzyme catalyses 2 a quinone + NADH + H(+) = 2 a 1,4-benzosemiquinone + NAD(+). It catalyses the reaction N,N-dimethyl-1,4-phenylenediamine + anthranilate + 2 NAD(+) = 2-(4-dimethylaminophenyl)diazenylbenzoate + 2 NADH + 2 H(+). Its function is as follows. Quinone reductase that provides resistance to thiol-specific stress caused by electrophilic quinones. Functionally, also exhibits azoreductase activity. Catalyzes the reductive cleavage of the azo bond in aromatic azo compounds to the corresponding amines. In Jannaschia sp. (strain CCS1), this protein is FMN-dependent NADH:quinone oxidoreductase 1.